The following is a 103-amino-acid chain: Small ribosomal subunit protein uS10 (103 aa).

It belongs to the universal ribosomal protein uS10 family. As to quaternary structure, part of the 30S ribosomal subunit.

Involved in the binding of tRNA to the ribosomes. The sequence is that of Small ribosomal subunit protein uS10 from Bordetella petrii (strain ATCC BAA-461 / DSM 12804 / CCUG 43448).